Consider the following 202-residue polypeptide: Small ribosomal subunit protein uS5 (202 aa).

The S5 DRBM domain maps to 46-109 (LKSEVLSVGF…RRAKLNIVPV (64 aa)).

It belongs to the universal ribosomal protein uS5 family. In terms of assembly, part of the 30S ribosomal subunit. Contacts protein S4.

Its function is as follows. With S4 and S12 plays an important role in translational accuracy. This is Small ribosomal subunit protein uS5 from Thermofilum pendens (strain DSM 2475 / Hrk 5).